Consider the following 307-residue polypeptide: Nicotinamide/nicotinic acid mononucleotide adenylyltransferase 2 (307 aa).

The NAD(+) site is built by S16 and F17. H24 contributes to the ATP binding site. The NAD(+) site is built by W92 and T95. 2 S-palmitoyl cysteine lipidation sites follow: C164 and C165. G200, D202, L212, W213, and R232 together coordinate NAD(+). Position 271–274 (271–274 (TKSR)) interacts with ATP.

This sequence belongs to the eukaryotic NMN adenylyltransferase family. In terms of assembly, monomer. Requires Mg(2+) as cofactor. In terms of processing, degraded in response to injured neurite. Degradation is caused by polyubiquitination by MYCBP2 after recognition by FBXO45. Palmitoylated; palmitoylation is required for membrane association. In terms of tissue distribution, expressed predominantly in the brain and nervous system.

Its subcellular location is the golgi apparatus membrane. The protein resides in the cytoplasmic vesicle membrane. It localises to the cytoplasm. The protein localises to the cell projection. It is found in the axon. The catalysed reaction is beta-nicotinamide D-ribonucleotide + ATP + H(+) = diphosphate + NAD(+). The enzyme catalyses nicotinate beta-D-ribonucleotide + ATP + H(+) = deamido-NAD(+) + diphosphate. Its pathway is cofactor biosynthesis; NAD(+) biosynthesis; NAD(+) from nicotinamide D-ribonucleotide: step 1/1. It functions in the pathway cofactor biosynthesis; NAD(+) biosynthesis; deamido-NAD(+) from nicotinate D-ribonucleotide: step 1/1. With respect to regulation, inhibited by P1-(adenosine-5')-P3-(nicotinamide-riboside-5')-triphosphate (Np3AD) and P1-(adenosine-5')-P4-(nicotinamide-riboside-5')-tetraphosphate (Np4AD). Its function is as follows. Nicotinamide/nicotinate-nucleotide adenylyltransferase that acts as an axon maintenance factor. Axon survival factor required for the maintenance of healthy axons: acts by delaying Wallerian axon degeneration, an evolutionarily conserved process that drives the loss of damaged axons. Catalyzes the formation of NAD(+) from nicotinamide mononucleotide (NMN) and ATP. Can also use the deamidated form; nicotinic acid mononucleotide (NaMN) as substrate but with a lower efficiency. Cannot use triazofurin monophosphate (TrMP) as substrate. Also catalyzes the reverse reaction, i.e. the pyrophosphorolytic cleavage of NAD(+). For the pyrophosphorolytic activity prefers NAD(+), NADH and NaAD as substrates and degrades nicotinic acid adenine dinucleotide phosphate (NHD) less effectively. Fails to cleave phosphorylated dinucleotides NADP(+), NADPH and NaADP(+). Also acts as an activator of ADP-ribosylation by supporting the catalytic activity of PARP16 and promoting mono-ADP-ribosylation of ribosomes by PARP16. May be involved in the maintenance of axonal integrity. The sequence is that of Nicotinamide/nicotinic acid mononucleotide adenylyltransferase 2 from Mus musculus (Mouse).